The following is a 300-amino-acid chain: Acetylglutamate kinase (300 aa).

Substrate-binding positions include 67 to 68, arginine 89, and asparagine 194; that span reads GG.

The protein belongs to the acetylglutamate kinase family. ArgB subfamily.

It is found in the cytoplasm. The enzyme catalyses N-acetyl-L-glutamate + ATP = N-acetyl-L-glutamyl 5-phosphate + ADP. It participates in amino-acid biosynthesis; L-arginine biosynthesis; N(2)-acetyl-L-ornithine from L-glutamate: step 2/4. In terms of biological role, catalyzes the ATP-dependent phosphorylation of N-acetyl-L-glutamate. This Saccharophagus degradans (strain 2-40 / ATCC 43961 / DSM 17024) protein is Acetylglutamate kinase.